A 457-amino-acid chain; its full sequence is Reticulophagy regulator 3 (457 aa).

The disordered stretch occupies residues 1-24 (MAQRVGEEEQGASGLRRRRSGARC). A run of 3 helical transmembrane segments spans residues 80 to 100 (FFALTSLRIIFLVAFGLMIII), 165 to 185 (PGKFCLLACSFLTFLAVLGGY), and 186 to 206 (IPGVVLSYLLLLFLLLWPLAI). Residues 291–305 (ENGTFNLSRGQTPLT) are compositionally biased toward polar residues. Disordered stretches follow at residues 291–351 (ENGT…IPST) and 410–457 (AYAE…HSHQ). Basic and acidic residues predominate over residues 310 to 326 (DLDRHSDPEESFARDLP). The span at 428 to 441 (LDTDAEADDFELLD) shows a compositional bias: acidic residues. The LIR motif signature appears at 435-440 (DDFELL). Positions 443–457 (SELSQMDPSSSHSHQ) are enriched in polar residues.

The protein belongs to the RETREG family. In terms of assembly, interacts with ATG8 family modifier proteins.

It is found in the endoplasmic reticulum membrane. Its function is as follows. Endoplasmic reticulum (ER)-anchored autophagy regulator which exists in an inactive state under basal conditions but is activated following cellular stress. When activated, induces ER fragmentation and mediates ER delivery into lysosomes through sequestration into autophagosomes via interaction with ATG8 family proteins. Promotes ER membrane curvature and ER tubulation required for subsequent ER fragmentation and engulfment into autophagosomes. This chain is Reticulophagy regulator 3 (retreg3), found in Xenopus tropicalis (Western clawed frog).